Reading from the N-terminus, the 449-residue chain is MGKEKVHINIVVIGHVDSGKSTTTGHLIYKLGGIDKRVIERFEKEAAEMNKRSFKYAWVLDKLKAERERGITIDIALWKFETNKYYCTVIDAPGHRDFIKNMITGTSQADCAVLIIDPTTGGFEAGISKDGQTREHALLAFTLGVKQMICCCNKMDATTPKYSKARYDEIVKEVSSYLKKVGYNPEKIAFVPISGFEGDNMIERSTNLDWYKGPTLLDALDQINEPKRPSDKPLRLPLQDVYKIGGIGTVPVGRVETGTIKPGMVVTFGPSGLTTEVKSVEMHHESLLEALPGDNVGFNVKNVSVKDLKRGYVASNSKDDPAKGAASFTSQVIIMNHPGQIGNGYAPVLDCHTSHIAVKFAELLTKIDRRSGKELEKEPKFLKNGDAGMVKMLPTKPMVVETFAEYPPLGRFAVRVMRQTVAVGVIKAVEKKDPTGAKVTKAAAKKGAK.

The tr-type G domain maps to 5-230 (KVHINIVVIG…DQINEPKRPS (226 aa)). Residues 14 to 21 (GHVDSGKS) are G1. 14–21 (GHVDSGKS) serves as a coordination point for GTP. Lys55 is modified (N6,N6-dimethyllysine). The interval 70-74 (GITID) is G2. The residue at position 79 (Lys79) is an N6,N6,N6-trimethyllysine. Residues 91–94 (DAPG) form a G3 region. Residues 91 to 95 (DAPGH) and 153 to 156 (NKMD) contribute to the GTP site. The tract at residues 153 to 156 (NKMD) is G4. Lys187 carries the post-translational modification N6,N6,N6-trimethyllysine. The tract at residues 194 to 196 (SGF) is G5. An N6-methyllysine modification is found at Lys261. Residue Glu289 is modified to 5-glutamyl glycerylphosphorylethanolamine. At Lys306 the chain carries N6,N6,N6-trimethyllysine. 5-glutamyl glycerylphosphorylethanolamine is present on Glu362. Lys396 carries the post-translational modification N6,N6,N6-trimethyllysine.

It belongs to the TRAFAC class translation factor GTPase superfamily. Classic translation factor GTPase family. EF-Tu/EF-1A subfamily.

It is found in the cytoplasm. Functionally, this protein promotes the GTP-dependent binding of aminoacyl-tRNA to the A-site of ribosomes during protein biosynthesis. The protein is Elongation factor 1-alpha of Daucus carota (Wild carrot).